The sequence spans 267 residues: Ribosomal RNA small subunit methyltransferase A (267 aa).

S-adenosyl-L-methionine is bound by residues Asn-18, Leu-20, Gly-45, Glu-66, Asp-91, and Asn-112.

Belongs to the class I-like SAM-binding methyltransferase superfamily. rRNA adenine N(6)-methyltransferase family. RsmA subfamily.

It is found in the cytoplasm. The catalysed reaction is adenosine(1518)/adenosine(1519) in 16S rRNA + 4 S-adenosyl-L-methionine = N(6)-dimethyladenosine(1518)/N(6)-dimethyladenosine(1519) in 16S rRNA + 4 S-adenosyl-L-homocysteine + 4 H(+). Functionally, specifically dimethylates two adjacent adenosines (A1518 and A1519) in the loop of a conserved hairpin near the 3'-end of 16S rRNA in the 30S particle. May play a critical role in biogenesis of 30S subunits. The polypeptide is Ribosomal RNA small subunit methyltransferase A (Shewanella woodyi (strain ATCC 51908 / MS32)).